The chain runs to 1528 residues: Zinc finger FYVE domain-containing protein 16 (1528 aa).

Position 120 is a phosphoserine (Ser-120). The tract at residues 629–664 (TQAVGGARPKQLLSLPPGTRSSKELNKPDVVDVPES) is disordered. Basic and acidic residues predominate over residues 649–658 (SSKELNKPDV). The FYVE-type zinc finger occupies 735–793 (DSEAPNCMNCQVKFTFTKRRHHCRACGKVFCGVCCNRKCKLQYLEKEARVCVICYETIN). Zn(2+) contacts are provided by Cys-741, Cys-744, Cys-757, Cys-760, Cys-765, Cys-768, Cys-785, and Cys-788. 4 positions are modified to phosphoserine: Ser-803, Ser-833, Ser-884, and Ser-927. The disordered stretch occupies residues 819–849 (TDQPLQETQTSSTPSPTTLPISALKQPNVEG). A compositionally biased stretch (low complexity) spans 821–838 (QPLQETQTSSTPSPTTLP). Residues 928–949 (PTCHTAPVERLPGNTGTEGLPM) form a disordered region.

Interacts (via C-terminus) with TOM1 (via C-terminus); interaction is required to target TOM1 to endosomes. Does not interact with TOM1L1 or TOM1L2.

It localises to the cytoplasm. Its subcellular location is the early endosome membrane. Its function is as follows. May be involved in regulating membrane trafficking in the endosomal pathway. Overexpression induces endosome aggregation. Required to target TOM1 to endosomes. The polypeptide is Zinc finger FYVE domain-containing protein 16 (Zfyve16) (Mus musculus (Mouse)).